Reading from the N-terminus, the 152-residue chain is Ribosome maturation factor RimP (152 aa).

This sequence belongs to the RimP family.

It is found in the cytoplasm. In terms of biological role, required for maturation of 30S ribosomal subunits. This chain is Ribosome maturation factor RimP, found in Sodalis glossinidius (strain morsitans).